A 495-amino-acid chain; its full sequence is Glycerol kinase (495 aa).

ADP is bound at residue threonine 11. ATP is bound by residues threonine 11, threonine 12, and serine 13. Threonine 11 is a sn-glycerol 3-phosphate binding site. Arginine 15 contacts ADP. Sn-glycerol 3-phosphate contacts are provided by arginine 81, glutamate 82, tyrosine 133, and aspartate 242. The glycerol site is built by arginine 81, glutamate 82, tyrosine 133, aspartate 242, and glutamine 243. Threonine 264 and glycine 307 together coordinate ADP. ATP is bound by residues threonine 264, glycine 307, glutamine 311, and glycine 408. ADP is bound by residues glycine 408 and asparagine 412.

It belongs to the FGGY kinase family.

The catalysed reaction is glycerol + ATP = sn-glycerol 3-phosphate + ADP + H(+). The protein operates within polyol metabolism; glycerol degradation via glycerol kinase pathway; sn-glycerol 3-phosphate from glycerol: step 1/1. Inhibited by fructose 1,6-bisphosphate (FBP). Functionally, key enzyme in the regulation of glycerol uptake and metabolism. Catalyzes the phosphorylation of glycerol to yield sn-glycerol 3-phosphate. The chain is Glycerol kinase from Alkalilimnicola ehrlichii (strain ATCC BAA-1101 / DSM 17681 / MLHE-1).